Here is a 148-residue protein sequence, read N- to C-terminus: Ribonuclease pancreatic (148 aa).

The N-terminal stretch at 1–25 is a signal peptide; the sequence is MGLEKSLILLPLLVLVFGWVQSSLG. Residues lysine 32 and arginine 35 each contribute to the substrate site. Histidine 36 acts as the Proton acceptor in catalysis. 4 disulfide bridges follow: cysteine 50–cysteine 108, cysteine 64–cysteine 119, cysteine 82–cysteine 134, and cysteine 89–cysteine 96. The N-linked (GlcNAc...) asparagine glycan is linked to asparagine 58. 65-69 contributes to the substrate binding site; the sequence is KPVNT. Asparagine 86 carries an N-linked (GlcNAc...) asparagine glycan. 2 residues coordinate substrate: lysine 90 and arginine 109. The active-site Proton donor is histidine 143.

Belongs to the pancreatic ribonuclease family. Monomer. Interacts with and forms tight 1:1 complexes with RNH1. Dimerization of two such complexes may occur. Interaction with RNH1 inhibits this protein. Pancreas.

The protein localises to the secreted. It carries out the reaction an [RNA] containing cytidine + H2O = an [RNA]-3'-cytidine-3'-phosphate + a 5'-hydroxy-ribonucleotide-3'-[RNA].. The enzyme catalyses an [RNA] containing uridine + H2O = an [RNA]-3'-uridine-3'-phosphate + a 5'-hydroxy-ribonucleotide-3'-[RNA].. Endonuclease that catalyzes the cleavage of RNA on the 3' side of pyrimidine nucleotides. Acts on single-stranded and double-stranded RNA. The sequence is that of Ribonuclease pancreatic (RNASE1) from Chionomys nivalis (European snow vole).